Reading from the N-terminus, the 162-residue chain is MENTEVKVGIADLNLVSSPNKIMTIGLGSCIGIALYDRRSKLAGLSHIMLPDSTQFKNVTNPMKFADLAIPLLIKKMEAKGCQKRNLIAKIAGGASMFSFSDKSMVGDIGKRNIQAVKKSLSEERIQIIAEDVGGNKGRTMILDALDGKVTLKIVGIGIVEL.

This sequence belongs to the CheD family.

The catalysed reaction is L-glutaminyl-[protein] + H2O = L-glutamyl-[protein] + NH4(+). Probably deamidates glutamine residues to glutamate on methyl-accepting chemotaxis receptors (MCPs), playing an important role in chemotaxis. The sequence is that of Probable chemoreceptor glutamine deamidase CheD from Clostridium botulinum (strain Eklund 17B / Type B).